The primary structure comprises 315 residues: Probable cytochrome c oxidase subunit 2 (315 aa).

A run of 3 helical transmembrane segments spans residues 54-74 (IALI…PLPW), 96-116 (LLYI…FVCI), and 133-153 (VLIE…IAVP). Cu cation contacts are provided by His235, Cys270, Cys274, and His278.

The protein belongs to the cytochrome c oxidase subunit 2 family. Requires Cu cation as cofactor. The cofactor is heme.

The protein localises to the cell membrane. It catalyses the reaction 4 Fe(II)-[cytochrome c] + O2 + 8 H(+)(in) = 4 Fe(III)-[cytochrome c] + 2 H2O + 4 H(+)(out). Its function is as follows. Subunits I and II form the functional core of the enzyme complex. Electrons originating in cytochrome c are transferred via heme a and Cu(A) to the binuclear center formed by heme a3 and Cu(B). This is Probable cytochrome c oxidase subunit 2 (ctaC) from Rickettsia conorii (strain ATCC VR-613 / Malish 7).